A 462-amino-acid chain; its full sequence is Ribosomal oxygenase 2 (462 aa).

Positions 1 to 24 (MPKKARPAGDGKEQGPAPKQVKVE) are disordered. The JmjC domain maps to 139–271 (QPQRFKDELW…SSWGDFLLDT (133 aa)). Fe cation is bound by residues histidine 179, aspartate 181, and histidine 240. At serine 308 the chain carries Phosphoserine.

The protein belongs to the ROX family. MINA53 subfamily. Fe(2+) serves as cofactor.

The protein localises to the nucleus. It is found in the nucleolus. The enzyme catalyses L-histidyl-[ribosomal protein uL15] + 2-oxoglutarate + O2 = (3S)-3-hydroxy-L-histidyl-[ribosomal protein uL15] + succinate + CO2. It catalyses the reaction L-histidyl-[protein] + 2-oxoglutarate + O2 = (3S)-3-hydroxy-L-histidyl-[protein] + succinate + CO2. Functionally, oxygenase that can act as both a histone lysine demethylase and a ribosomal histidine hydroxylase. Is involved in the demethylation of trimethylated 'Lys-9' on histone H3 (H3K9me3), leading to an increase in ribosomal RNA expression. Also catalyzes the hydroxylation of 60S ribosomal protein L27a on 'His-39'. May play an important role in cell growth and survival. May be involved in ribosome biogenesis, most likely during the assembly process of pre-ribosomal particles. The sequence is that of Ribosomal oxygenase 2 (RIOX2) from Bos taurus (Bovine).